The sequence spans 72 residues: MRLVVCLVFLASFALVCQGEAYRGGYTGPIPRPPPIGRPPFRPVCNACYRLSVSDARNCCIKFGSCCHLVKG.

Positions 1-21 are cleaved as a signal peptide; it reads MRLVVCLVFLASFALVCQGEA. Disulfide bonds link Cys45–Cys59, Cys48–Cys66, and Cys60–Cys67. The residue at position 71 (Lys71) is a Lysine amide.

In terms of tissue distribution, higher expression in hemocytes and to a lesser extent in heart, testis, gills, intestine, lymphoid organ and hepatopancreas. Traces in eyes and subcuticular epithelium. Not present in the brain.

It localises to the cytoplasmic granule. Functionally, antibacterial activity against M.luteus and E.coli bacteria. Antifungal activity against N.crassa and F.oxysporum. Presents chitin-binding activity. This is Penaeidin-2a from Penaeus vannamei (Whiteleg shrimp).